A 265-amino-acid chain; its full sequence is Undecaprenyl-diphosphatase (265 aa).

The next 7 helical transmembrane spans lie at 42–62, 82–102, 108–128, 143–163, 181–201, 221–241, and 248–264; these read AATF…VLYW, GIML…AAHS, LFTP…MLLV, MSPA…WPGF, GLAA…ATGY, GFVV…ALVG, and FAWY…YFMA.

It belongs to the UppP family.

The protein resides in the cell inner membrane. The catalysed reaction is di-trans,octa-cis-undecaprenyl diphosphate + H2O = di-trans,octa-cis-undecaprenyl phosphate + phosphate + H(+). Its function is as follows. Catalyzes the dephosphorylation of undecaprenyl diphosphate (UPP). Confers resistance to bacitracin. The protein is Undecaprenyl-diphosphatase of Nitratidesulfovibrio vulgaris (strain DP4) (Desulfovibrio vulgaris).